We begin with the raw amino-acid sequence, 101 residues long: Large ribosomal subunit protein eL21 (101 aa).

Over residues Met-1–Lys-18 the composition is skewed to basic residues. The interval Met-1 to Arg-23 is disordered.

This sequence belongs to the eukaryotic ribosomal protein eL21 family.

This chain is Large ribosomal subunit protein eL21, found in Saccharolobus islandicus (strain Y.N.15.51 / Yellowstone #2) (Sulfolobus islandicus).